The chain runs to 516 residues: Rho guanine nucleotide exchange factor 9 (516 aa).

The SH3 domain maps to 8–67 (DSIVSAEAVWDHVTMANRELAFKAGDVIKVLDASNKDWWWGQIDDEEGWFPASFVRLWVN). Residues 100–110 (RDQMRANVINE) are interaction with GPHN. The 185-residue stretch at 103–287 (MRANVINEIM…RNVTQQINER (185 aa)) folds into the DH domain. Positions 318-425 (ELIYTGEMAW…WLRAFREERK (108 aa)) constitute a PH domain. The disordered stretch occupies residues 450 to 480 (RKASKQKGVNSARSVPPSYPPPQDPLNQGQY). S502 is modified (phosphoserine).

In terms of assembly, interacts with GPHN. Detected in embryonic and adult brain.

The protein localises to the cytoplasm. The protein resides in the postsynaptic density. In terms of biological role, acts as a guanine nucleotide exchange factor (GEF) for CDC42. Promotes formation of GPHN clusters. The protein is Rho guanine nucleotide exchange factor 9 (Arhgef9) of Mus musculus (Mouse).